An 86-amino-acid chain; its full sequence is Polcalcin Che a 3 (86 aa).

EF-hand domains follow at residues 8-43 (QDIADRERIFKRFDTNGDGKISSSELGDALKTLGSV) and 43-78 (VTPDEVRRMMAEIDTDGDGFISFDEFTDFARANRGL). Ca(2+)-binding residues include D21, N23, D25, K27, E32, D56, D58, D60, and E67.

The polypeptide is Polcalcin Che a 3 (Chenopodium album (Fat hen)).